The following is a 413-amino-acid chain: Elongation factor 1-alpha (413 aa).

The tr-type G domain occupies 5–211 (KEHINLAFIG…DNLAAPEKPV (207 aa)). The segment at 14–21 (GHVDHGKS) is G1. 14–21 (GHVDHGKS) provides a ligand contact to GTP. Serine 21 provides a ligand contact to Mg(2+). The segment at 60–64 (GVTID) is G2. The tract at residues 81–84 (DCPG) is G3. GTP contacts are provided by residues 81–85 (DCPGH) and 136–139 (NKID). Residues 136–139 (NKID) form a G4 region. The G5 stretch occupies residues 175-177 (SAF).

Belongs to the TRAFAC class translation factor GTPase superfamily. Classic translation factor GTPase family. EF-Tu/EF-1A subfamily.

It localises to the cytoplasm. The enzyme catalyses GTP + H2O = GDP + phosphate + H(+). Functionally, GTP hydrolase that promotes the GTP-dependent binding of aminoacyl-tRNA to the A-site of ribosomes during protein biosynthesis. In Methanobrevibacter smithii (strain ATCC 35061 / DSM 861 / OCM 144 / PS), this protein is Elongation factor 1-alpha.